The primary structure comprises 729 residues: Putative cyclic nucleotide-gated ion channel 19 (729 aa).

Residues 1 to 172 lie on the Cytoplasmic side of the membrane; that stretch reads MAHTRTFTSR…SKFVQVWTRV (172 aa). The tract at residues 52 to 82 is disordered; it reads SGPIHSTRRTEPLFSPSPQESPDSSSTVDVP. A compositionally biased stretch (low complexity) spans 67–81; that stretch reads PSPQESPDSSSTVDV. The helical transmembrane segment at 173–193 threads the bilayer; that stretch reads LAFSSLVAIFIDPLFFFLLLI. Over 194 to 208 the chain is Extracellular; it reads QQDNKCIAIDWRATK. Residues 209–229 traverse the membrane as a helical segment; it reads VLVSLRSITDLIFFINILLQF. Topologically, residues 230–261 are cytoplasmic; that stretch reads RLAYVAPESRIVGAGQLVDHPRKIARHYFRGK. A helical transmembrane segment spans residues 262–282; it reads FLLDMFIVFPIPQIMILRIIP. The Extracellular segment spans residues 283–295; that stretch reads LHLGTRREESEKQ. A helical membrane pass occupies residues 296–316; the sequence is ILRATVLFQYIPKLYRLLPLL. At 317–332 the chain is on the cytoplasmic side; sequence AGQTSTGFIFESAWAN. Residues 333–353 traverse the membrane as a helical segment; it reads FVINLLTFMLAGHAVGSCWYL. Residues 354-451 are Extracellular-facing; the sequence is SALQRVKKCM…STLAGNLSPS (98 aa). A helical membrane pass occupies residues 452 to 472; that stretch reads YSVGEVFFTMGIIGLGLLLFA. The Cytoplasmic segment spans residues 473–729; sequence RLIGNMHNFL…LNTAHSNSNR (257 aa). Residues 560–677 and E625 contribute to the a nucleoside 3',5'-cyclic phosphate site; that span reads IFSL…VTSL. The tract at residues 678-694 is calmodulin-binding; the sequence is FSRFLRSHRVQGAIRYE. Residues 699–728 form the IQ domain; it reads RLRAAMQIQVAWRYRKRQLQRLNTAHSNSN.

Belongs to the cyclic nucleotide-gated cation channel (TC 1.A.1.5) family. In terms of assembly, homotetramer or heterotetramer.

It localises to the cell membrane. Putative cyclic nucleotide-gated ion channel. This Arabidopsis thaliana (Mouse-ear cress) protein is Putative cyclic nucleotide-gated ion channel 19 (CNGC19).